Here is a 419-residue protein sequence, read N- to C-terminus: Serine--tRNA ligase (419 aa).

Residue 226–228 (TSE) participates in L-serine binding. ATP contacts are provided by residues 257-259 (RRE) and Val273. Residue Glu280 participates in L-serine binding. 344–347 (ELTS) provides a ligand contact to ATP. Residue Thr379 coordinates L-serine.

The protein belongs to the class-II aminoacyl-tRNA synthetase family. Type-1 seryl-tRNA synthetase subfamily. As to quaternary structure, homodimer. The tRNA molecule binds across the dimer.

The protein localises to the cytoplasm. The enzyme catalyses tRNA(Ser) + L-serine + ATP = L-seryl-tRNA(Ser) + AMP + diphosphate + H(+). It carries out the reaction tRNA(Sec) + L-serine + ATP = L-seryl-tRNA(Sec) + AMP + diphosphate + H(+). It functions in the pathway aminoacyl-tRNA biosynthesis; selenocysteinyl-tRNA(Sec) biosynthesis; L-seryl-tRNA(Sec) from L-serine and tRNA(Sec): step 1/1. Its function is as follows. Catalyzes the attachment of serine to tRNA(Ser). Is also able to aminoacylate tRNA(Sec) with serine, to form the misacylated tRNA L-seryl-tRNA(Sec), which will be further converted into selenocysteinyl-tRNA(Sec). The polypeptide is Serine--tRNA ligase (Corynebacterium efficiens (strain DSM 44549 / YS-314 / AJ 12310 / JCM 11189 / NBRC 100395)).